Reading from the N-terminus, the 136-residue chain is Putative pre-16S rRNA nuclease (136 aa).

It belongs to the YqgF nuclease family.

Its subcellular location is the cytoplasm. Functionally, could be a nuclease involved in processing of the 5'-end of pre-16S rRNA. This Francisella tularensis subsp. mediasiatica (strain FSC147) protein is Putative pre-16S rRNA nuclease.